Reading from the N-terminus, the 539-residue chain is MSNGNSYNHHHQFPMSIPISCSSHSIQSQSRMNTLNANRDLLSPGNDVIVTRTVSPSFYSHGMPARDNVFRKDDHVRILGNTTDPAWYRARNANQEEGLVHADCVVRINGQAYDNGIVRMRASGCDVAPGAASTTSSTSSHHSTAANHQPWFHSMISRENTEKLLRGKPDGTFLVRESTNFPGDFTLCMSFHGKVEHYRIEQTSGGQLTCDKEEYFSNLTQLVSHYKRDADGLCHRLVTPIICETATFSSNGSSSFGSSSTVDLEDRTSVFRHAGLVISSNDIDVGDTIGHGEFGDVRLGTYKNRKVALKVSKRHGNGMLDSLLDEAKFMVGLSHPNLVTLVGVVLDDVNVYMITEYMANGNLIDLLRSRGRHALERRQLMMFAMDICQGMCYLESKQIVHRDLAARNVLLDDDLVAKVSDFGLAKKANSQSHDSASGKFPIKWTAPEALRHSQFTTKSDVWSFGILLWEIFSFGRVPYPRIPIQDVVRYIEKGYRMEAPEGCPPEIFKVMNETWALSAQDRPSFGQVLQRLTTIRNTV.

The 68-residue stretch at 43 to 110 (SPGNDVIVTR…HADCVVRING (68 aa)) folds into the SH3 domain. The tract at residues 129 to 148 (PGAASTTSSTSSHHSTAANH) is disordered. The span at 131–146 (AASTTSSTSSHHSTAA) shows a compositional bias: low complexity. Residues 151 to 241 (WFHSMISREN…GLCHRLVTPI (91 aa)) form the SH2 domain. Residues 283 to 535 (IDVGDTIGHG…GQVLQRLTTI (253 aa)) form the Protein kinase domain. ATP contacts are provided by residues 289-297 (IGHGEFGDV) and Lys-310. Asp-403 acts as the Proton acceptor in catalysis.

This sequence belongs to the protein kinase superfamily. Tyr protein kinase family. CSK subfamily. It depends on Mg(2+) as a cofactor. Mn(2+) is required as a cofactor. As to expression, expressed predominantly in pharyngeal muscles in procorpus, metacorpus and terminal bulb. Expressed also in some neurons (ASE, ADF, AVA, AUA, RMDV and BAG) in the head region, anchor cell, vulva, cells around anus, body wall muscle and gondal distal tip cells.

It catalyses the reaction L-tyrosyl-[protein] + ATP = O-phospho-L-tyrosyl-[protein] + ADP + H(+). In terms of biological role, non-receptor tyrosine-protein kinase which plays a role in pharynx function by regulating pumping and the orientation of pharyngeal muscle fibers, independently of src-1 and src-2. May phosphorylate and thereby negatively regulate src-1 and src-2 activities. This is Tyrosine-protein kinase csk-1 from Caenorhabditis elegans.